A 162-amino-acid chain; its full sequence is NADH-quinone oxidoreductase subunit I (162 aa).

4Fe-4S ferredoxin-type domains follow at residues 54 to 83 (RRYE…IESE) and 93 to 122 (TRYD…ETQI). Residues Cys-63, Cys-66, Cys-69, Cys-73, Cys-102, Cys-105, Cys-108, and Cys-112 each coordinate [4Fe-4S] cluster.

This sequence belongs to the complex I 23 kDa subunit family. In terms of assembly, NDH-1 is composed of 14 different subunits. Subunits NuoA, H, J, K, L, M, N constitute the membrane sector of the complex. [4Fe-4S] cluster serves as cofactor.

Its subcellular location is the cell inner membrane. The enzyme catalyses a quinone + NADH + 5 H(+)(in) = a quinol + NAD(+) + 4 H(+)(out). Functionally, NDH-1 shuttles electrons from NADH, via FMN and iron-sulfur (Fe-S) centers, to quinones in the respiratory chain. The immediate electron acceptor for the enzyme in this species is believed to be ubiquinone. Couples the redox reaction to proton translocation (for every two electrons transferred, four hydrogen ions are translocated across the cytoplasmic membrane), and thus conserves the redox energy in a proton gradient. The sequence is that of NADH-quinone oxidoreductase subunit I from Burkholderia ambifaria (strain MC40-6).